The following is a 654-amino-acid chain: MSASSHHDLHSKLSLGGILVTLGIIYGDIGTSPLYVMKSIIGLHTIKPEVVLGGISAIFWTLTLQTTLKYVLITLSADNHGEGGIFALYALVKRTKVKWLIIPAIIGGSALLADGIITPPVSVASAVEGVRTYYPDINTVPIVIAILVVLFTIQQFGTKLVGKFFAPMMMIWFAMLAILGILQITQNTSVLCAVNPYYAYKLLSIHPDGFYVLGFVFLCTTGAEALYSDMGHCGRKNIRISWIFVKIALLLNYFGQGAYLIKHAGHTLKSINANNGNPFYLVMPEWFQPFGIVISTMAAVIASQALISGSFTLINEAMRLNFWPKVKIKYPTDLKGQIYIPSINWLLLAGCIGIVLHFEESSKMEAAYGLAIVLCMIMTTILLTYFMILKRISWFIIAPLILLYLVIEFSFLIANLDKFPHGGYVTLIIASALTFIMSIWYTAKKISKNYTKIVKIQTYKKVLAELSVDLSIPKYATHLVYMTNANRVDEIEEKVMYSILQKRPKRADLYWFIHINITNEPYKKEYKVTEIIKNDLFRIDFNLGFREPTKINLMFKEVIKDMVAKGEVDITSRYESLSKNNIIGDFKFVLSEKFLSNDSFMHWHEKLVMNTYFFFKKMSLSEEQAFGLDSSSVKVEKFPMVLHAPEKIELCRIK.

13 helical membrane passes run 17–37 (GILV…LYVM), 40–60 (IIGL…AIFW), 71–91 (VLIT…LYAL), 99–119 (WLII…IITP), 137–157 (INTV…QQFG), 164–184 (FFAP…ILQI), 202–222 (LLSI…CTTG), 240–260 (ISWI…GAYL), 281–301 (LVMP…AAVI), 338–358 (IYIP…VLHF), 369–389 (GLAI…FMIL), 394–414 (WFII…FLIA), and 423–443 (GYVT…WYTA).

This sequence belongs to the HAK/KUP transporter (TC 2.A.72) family.

The protein localises to the cell inner membrane. It catalyses the reaction K(+)(in) + H(+)(in) = K(+)(out) + H(+)(out). In terms of biological role, transport of potassium into the cell. Likely operates as a K(+):H(+) symporter. The sequence is that of Probable potassium transport system protein Kup from Flavobacterium psychrophilum (strain ATCC 49511 / DSM 21280 / CIP 103535 / JIP02/86).